Reading from the N-terminus, the 1255-residue chain is MNGYAEFPPSPSNPTKEPVEPQPSQVPLQEDVDMSSGSSGHETNENCSTGRDSQGSDCDDSGKELGMLVEPPDARQSPDTFSLMMAKSEHNPSTSGCSSDQSSKVDTHKELIKTLKELKVHLPADKKAKGKASTLATLKYALRSVKQVKANEEYYQLLMSSEGHPCGADVPSYTVEEMESVTSEHIVKNADMFAVAVSLVSGKILYISDQVASIFHCKRDAFSDAKFVEFLAPHDVGVFHSFTSPYKLPLWSMCSGADSFTQECMEEKSFFCRVSVRKSHENEIRYHPFRMTPYLVKVRDQQGAESQLCCLLLAERVHSGYEAPRIPPEKRIFTTTHTPNCLFQDVDERAVPLLGYLPQDLIETPVLVQLHPSDRPLMLAIHKKILQSGGQPFDYSPIRFRARNGEYITLDTSWSSFINPWSRKISFIIGRHKVRVGPLNEDVFAAHPCTEEKALHPSIQELTEQIHRLLLQPVPHSGSSGYGSLGSNGSHEHLMSQTSSSDSNGHEDSRRRRAEICKNGNKTKNRSHYSHESGEQKKKSVTEMQTNPPAEKKAVPAMEKDSLGVSFPEELACKNQPTCSYQQISCLDSVIRYLESCNEAATLKRKCEFPANVPALRSSDKRKATVSPGPHAGEAEPPSRVNSRTGVGTHLTSLALPGKAESVASLTSQCSYSSTIVHVGDKKPQPELEMVEDAASGPESLDCLAGPALACGLSQEKEPFKKLGLTKEVLAAHTQKEEQSFLQKFKEIRKLSIFQSHCHYYLQERSKGQPSERTAPGLRNTSGIDSPWKKTGKNRKLKSKRVKPRDSSESTGSGGPVSARPPLVGLNATAWSPSDTSQSSCPAVPFPAPVPAAYSLPVFPAPGTVAAPPAPPHASFTVPAVPVDLQHQFAVQPPPFPAPLAPVMAFMLPSYSFPSGTPNLPQAFFPSQPQFPSHPTLTSEMASASQPEFPSRTSIPRQPCACPATRATPPSAMGRASPPLFQSRSSSPLQLNLLQLEEAPEGGTGAMGTTGATETAAVGADCKPGTSRDQQPKAPLTRDEPSDTQNSDALSTSSGLLNLLLNEDLCSASGSAASESLGSGSLGCDASPSGAGSSDTSHTSKYFGSIDSSENNHKAKMNTGMEESEHFIKCVLQDPIWLLMADADSSVMMTYQLPSRNLEAVLKEDREKLKLLQKLQPRFTESQKQELREVHQWMQTGGLPAAIDVAECVYCENKEKGNICIPYEEDIPSLGLSEVSDTKEDENGSPLNHRIEEQT.

Residues 1-79 (MNGYAEFPPS…EPPDARQSPD (79 aa)) form a disordered region. Positions 35-56 (SSGSSGHETNENCSTGRDSQGS) are enriched in polar residues. Positions 111-120 (LIKTLKELKV) match the Nuclear export signal 1 motif. The PAS 1 domain maps to 181–248 (VTSEHIVKNA…FHSFTSPYKL (68 aa)). Residues 308–312 (LCCLL) carry the LXXLL motif. A PAS 2 domain is found at 321–387 (YEAPRIPPEK…MLAIHKKILQ (67 aa)). Residues 395–438 (YSPIRFRARNGEYITLDTSWSSFINPWSRKISFIIGRHKVRVGP) enclose the PAC domain. The short motif at 462–471 (LTEQIHRLLL) is the Nuclear export signal 2 element. 2 disordered regions span residues 473–557 (PVPH…AVPA) and 617–646 (RSSD…SRTG). The tract at residues 480-484 (SGYGS) is important for protein stability. A compositionally biased stretch (basic and acidic residues) spans 504-516 (NGHEDSRRRRAEI). Positions 512–717 (RRAEICKNGN…ALACGLSQEK (206 aa)) are CSNK1E binding domain. 4 positions are modified to phosphoserine: Ser527, Ser530, Ser533, and Ser540. Positions 529–541 (YSHESGEQKKKSV) are enriched in basic and acidic residues. Ser662, Ser696, Ser700, Ser714, Ser766, and Ser771 each carry phosphoserine. Disordered regions lie at residues 764–838 (ERSK…DTSQ) and 931–985 (FPSH…QSRS). Residues 789-805 (KKTGKNRKLKSKRVKPR) carry the Nuclear localization signal motif. Residues 790-803 (KTGKNRKLKSKRVK) show a composition bias toward basic residues. Composition is skewed to polar residues over residues 829 to 838 (TAWSPSDTSQ) and 936 to 956 (TLTS…TSIP). Positions 888 to 1071 (QFAVQPPPFP…NEDLCSASGS (184 aa)) are interaction with PPARG. A Phosphoserine modification is found at Ser945. The span at 959–972 (PCACPATRATPPSA) shows a compositional bias: low complexity. Position 977 is a phosphoserine (Ser977). The Nuclear export signal 3 signature appears at 989-996 (LQLNLLQL). The tract at residues 1018–1050 (VGADCKPGTSRDQQPKAPLTRDEPSDTQNSDAL) is disordered. The LXXLL signature appears at 1057–1061 (LNLLL). The tract at residues 1077-1106 (LGSGSLGCDASPSGAGSSDTSHTSKYFGSI) is disordered. Residues 1090-1106 (GAGSSDTSHTSKYFGSI) show a composition bias toward polar residues. The residue at position 1124 (Ser1124) is a Phosphoserine. The interval 1155-1255 (SRNLEAVLKE…PLNHRIEEQT (101 aa)) is CRY binding domain. Residues 1231–1255 (GLSEVSDTKEDENGSPLNHRIEEQT) are disordered.

Homodimer. Component of the circadian core oscillator, which includes the CRY proteins, CLOCK or NPAS2, BMAL1 or BMAL2, CSNK1D and/or CSNK1E, TIMELESS, and the PER proteins. Interacts with CLOCK-BMAL1 (off DNA). Interacts with BMAL2. Interacts directly with PER1 and PER3, and through a C-terminal domain, with CRY1 and CRY2. Interacts (via PAS 2 domain) with TIMELESS. Interacts with NFIL3. Different large complexes have been identified with different repressive functions. The core of PER complexes is composed of at least PER1, PER2, PER3, CRY1, CRY2, CSNK1D and/or CSNK1E. The large PER complex involved in the repression of transcriptional termination is composed of at least PER2, CDK9, DDX5, DHX9, NCBP1 and POLR2A (active). The large PER complex involved in the histone deacetylation is composed of at least HDAC1, PER2, SFPQ and SIN3A. The large PER complex involved in the histone methylation is composed of at least PER2, CBX3, TRIM28, SUV39H1 and/or SUV39H2; CBX3 mediates the formation of the complex. Interacts with SETX; the interaction inhibits termination of circadian target genes. Interacts with the nuclear receptors HNF4A, NR1D1, NR4A2, RORA, PPARA, PPARG and THRA; the interaction with at least PPARG is ligand dependent. Interacts with PML. Interacts (phosphorylated) with BTRC and FBXW11; the interactions trigger proteasomal degradation. Interacts with NONO and SFPQ. Interacts with CAVIN3. Interacts with MAGEL2. Interacts with MAP1LC3B. Interacts with HNF4A. Post-translationally, acetylated. Deacetylated by SIRT1, resulting in decreased protein stability. Deacetylated by SIRT6, preventing its degradation by the proteasome, resulting in increased protein stability. In terms of processing, phosphorylated by CSNK1E and CSNK1D. Phosphorylation results in PER2 protein degradation. May be dephosphorylated by PP1. Ubiquitinated, leading to its proteasomal degradation. Ubiquitination may be inhibited by CRY1. In terms of tissue distribution, widely expressed. Found in heart, brain, placenta, lung, liver, skeleatal muscle, kidney and pancreas. High levels in skeletal muscle and pancreas. Low levels in lung. Isoform 2 is expressed in keratinocytes (at protein level).

It is found in the nucleus. It localises to the cytoplasm. The protein localises to the perinuclear region. Its subcellular location is the nucleolus. Its function is as follows. Transcriptional repressor which forms a core component of the circadian clock. The circadian clock, an internal time-keeping system, regulates various physiological processes through the generation of approximately 24 hour circadian rhythms in gene expression, which are translated into rhythms in metabolism and behavior. It is derived from the Latin roots 'circa' (about) and 'diem' (day) and acts as an important regulator of a wide array of physiological functions including metabolism, sleep, body temperature, blood pressure, endocrine, immune, cardiovascular, and renal function. Consists of two major components: the central clock, residing in the suprachiasmatic nucleus (SCN) of the brain, and the peripheral clocks that are present in nearly every tissue and organ system. Both the central and peripheral clocks can be reset by environmental cues, also known as Zeitgebers (German for 'timegivers'). The predominant Zeitgeber for the central clock is light, which is sensed by retina and signals directly to the SCN. The central clock entrains the peripheral clocks through neuronal and hormonal signals, body temperature and feeding-related cues, aligning all clocks with the external light/dark cycle. Circadian rhythms allow an organism to achieve temporal homeostasis with its environment at the molecular level by regulating gene expression to create a peak of protein expression once every 24 hours to control when a particular physiological process is most active with respect to the solar day. Transcription and translation of core clock components (CLOCK, NPAS2, BMAL1, BMAL2, PER1, PER2, PER3, CRY1 and CRY2) plays a critical role in rhythm generation, whereas delays imposed by post-translational modifications (PTMs) are important for determining the period (tau) of the rhythms (tau refers to the period of a rhythm and is the length, in time, of one complete cycle). A diurnal rhythm is synchronized with the day/night cycle, while the ultradian and infradian rhythms have a period shorter and longer than 24 hours, respectively. Disruptions in the circadian rhythms contribute to the pathology of cardiovascular diseases, cancer, metabolic syndrome and aging. A transcription/translation feedback loop (TTFL) forms the core of the molecular circadian clock mechanism. Transcription factors, CLOCK or NPAS2 and BMAL1 or BMAL2, form the positive limb of the feedback loop, act in the form of a heterodimer and activate the transcription of core clock genes and clock-controlled genes (involved in key metabolic processes), harboring E-box elements (5'-CACGTG-3') within their promoters. The core clock genes: PER1/2/3 and CRY1/2 which are transcriptional repressors form the negative limb of the feedback loop and interact with the CLOCK|NPAS2-BMAL1|BMAL2 heterodimer inhibiting its activity and thereby negatively regulating their own expression. This heterodimer also activates nuclear receptors NR1D1/2 and RORA/B/G, which form a second feedback loop and which activate and repress BMAL1 transcription, respectively. PER1 and PER2 proteins transport CRY1 and CRY2 into the nucleus with appropriate circadian timing, but also contribute directly to repression of clock-controlled target genes through interaction with several classes of RNA-binding proteins, helicases and others transcriptional repressors. PER appears to regulate circadian control of transcription by at least three different modes. First, interacts directly with the CLOCK-BMAL1 at the tail end of the nascent transcript peak to recruit complexes containing the SIN3-HDAC that remodel chromatin to repress transcription. Second, brings H3K9 methyltransferases such as SUV39H1 and SUV39H2 to the E-box elements of the circadian target genes, like PER2 itself or PER1. The recruitment of each repressive modifier to the DNA seems to be very precisely temporally orchestrated by the large PER complex, the deacetylases acting before than the methyltransferases. Additionally, large PER complexes are also recruited to the target genes 3' termination site through interactions with RNA-binding proteins and helicases that may play a role in transcription termination to regulate transcription independently of CLOCK-BMAL1 interactions. Recruitment of large PER complexes to the elongating polymerase at PER and CRY termination sites inhibited SETX action, impeding RNA polymerase II release and thereby repressing transcriptional reinitiation. May propagate clock information to metabolic pathways via the interaction with nuclear receptors. Coactivator of PPARA and corepressor of NR1D1, binds rhythmically at the promoter of nuclear receptors target genes like BMAL1 or G6PC1. Directly and specifically represses PPARG proadipogenic activity by blocking PPARG recruitment to target promoters and thereby inhibiting transcriptional activation. Required for fatty acid and lipid metabolism, is involved as well in the regulation of circulating insulin levels. Plays an important role in the maintenance of cardiovascular functions through the regulation of NO and vasodilatatory prostaglandins production in aortas. Controls circadian glutamate uptake in synaptic vesicles through the regulation of VGLUT1 expression. May also be involved in the regulation of inflammatory processes. Represses the CLOCK-BMAL1 induced transcription of BHLHE40/DEC1 and ATF4. Negatively regulates the formation of the TIMELESS-CRY1 complex by competing with TIMELESS for binding to CRY1. The protein is Period circadian protein homolog 2 (PER2) of Homo sapiens (Human).